The sequence spans 396 residues: Tryptophan synthase beta chain (396 aa).

Lysine 88 carries the post-translational modification N6-(pyridoxal phosphate)lysine.

Belongs to the TrpB family. Tetramer of two alpha and two beta chains. Pyridoxal 5'-phosphate serves as cofactor.

The catalysed reaction is (1S,2R)-1-C-(indol-3-yl)glycerol 3-phosphate + L-serine = D-glyceraldehyde 3-phosphate + L-tryptophan + H2O. Its pathway is amino-acid biosynthesis; L-tryptophan biosynthesis; L-tryptophan from chorismate: step 5/5. Its function is as follows. The beta subunit is responsible for the synthesis of L-tryptophan from indole and L-serine. The polypeptide is Tryptophan synthase beta chain (Shewanella oneidensis (strain ATCC 700550 / JCM 31522 / CIP 106686 / LMG 19005 / NCIMB 14063 / MR-1)).